We begin with the raw amino-acid sequence, 486 residues long: Aspartyl/glutamyl-tRNA(Asn/Gln) amidotransferase subunit B (486 aa).

It belongs to the GatB/GatE family. GatB subfamily. Heterotrimer of A, B and C subunits.

The enzyme catalyses L-glutamyl-tRNA(Gln) + L-glutamine + ATP + H2O = L-glutaminyl-tRNA(Gln) + L-glutamate + ADP + phosphate + H(+). It catalyses the reaction L-aspartyl-tRNA(Asn) + L-glutamine + ATP + H2O = L-asparaginyl-tRNA(Asn) + L-glutamate + ADP + phosphate + 2 H(+). Functionally, allows the formation of correctly charged Asn-tRNA(Asn) or Gln-tRNA(Gln) through the transamidation of misacylated Asp-tRNA(Asn) or Glu-tRNA(Gln) in organisms which lack either or both of asparaginyl-tRNA or glutaminyl-tRNA synthetases. The reaction takes place in the presence of glutamine and ATP through an activated phospho-Asp-tRNA(Asn) or phospho-Glu-tRNA(Gln). The chain is Aspartyl/glutamyl-tRNA(Asn/Gln) amidotransferase subunit B from Leptospira borgpetersenii serovar Hardjo-bovis (strain L550).